The chain runs to 262 residues: Indole-3-glycerol phosphate synthase (262 aa).

Belongs to the TrpC family.

The enzyme catalyses 1-(2-carboxyphenylamino)-1-deoxy-D-ribulose 5-phosphate + H(+) = (1S,2R)-1-C-(indol-3-yl)glycerol 3-phosphate + CO2 + H2O. Its pathway is amino-acid biosynthesis; L-tryptophan biosynthesis; L-tryptophan from chorismate: step 4/5. The protein is Indole-3-glycerol phosphate synthase of Chlorobium luteolum (strain DSM 273 / BCRC 81028 / 2530) (Pelodictyon luteolum).